The primary structure comprises 234 residues: MSTPGDFSLSPFILGGAVDPRSMSQLGNICHADYMSTSTESQERSLNNPNDTHPEIVNVVSTFQLGVKLELRKIVQKARNAEYNPKRFAGAIMRISSPKSTALIFQTGKIVCTGTRSIEESKIASKKYAKIIKKIGYPIHYSNFNVQNIVGSCDVKFQIALRTLVDSYLAFCQYEPEVFPGLVYRMASPKVTLLVFSTGKVVLTGAKDEESLNLAYKNIYPILLANRKEDISNQ.

2 consecutive repeat copies span residues 52-136 (THPE…KKIG) and 142-223 (SNFN…YPIL).

It belongs to the TBP family. As to quaternary structure, belongs to the TFIID complex together with the TBP-associated factors (TAFs). Binds DNA as monomer.

The protein resides in the nucleus. Its function is as follows. General transcription factor that functions at the core of the DNA-binding multiprotein factor TFIID. Binding of TFIID to the TATA box is the initial transcriptional step of the pre-initiation complex (PIC), playing a role in the activation of eukaryotic genes transcribed by RNA polymerase II. This is TATA-box-binding protein 1 (TBP) from Entamoeba histolytica (strain ATCC 30459 / HM-1:IMSS / ABRM).